The following is a 400-amino-acid chain: Tyrosine--tRNA ligase (400 aa).

The 'HIGH' region signature appears at 45 to 54; the sequence is PTAPDLHLGH. The short motif at 230–234 is the 'KMSKS' region element; sequence KMSKS. Lys-233 is a binding site for ATP. Positions 339 to 399 constitute an S4 RNA-binding domain; that stretch reads EWIARVLVIA…GKRRFAKVII (61 aa).

It belongs to the class-I aminoacyl-tRNA synthetase family. TyrS type 2 subfamily. In terms of assembly, homodimer.

The protein localises to the cytoplasm. It catalyses the reaction tRNA(Tyr) + L-tyrosine + ATP = L-tyrosyl-tRNA(Tyr) + AMP + diphosphate + H(+). Its function is as follows. Catalyzes the attachment of tyrosine to tRNA(Tyr) in a two-step reaction: tyrosine is first activated by ATP to form Tyr-AMP and then transferred to the acceptor end of tRNA(Tyr). This Helicobacter hepaticus (strain ATCC 51449 / 3B1) protein is Tyrosine--tRNA ligase.